Here is a 244-residue protein sequence, read N- to C-terminus: Type III pantothenate kinase (244 aa).

Residue 8–15 coordinates ATP; it reads DQGNSACK. 94–97 contributes to the substrate binding site; that stretch reads GADR. Residue Asp-96 is the Proton acceptor of the active site. Asp-117 contributes to the K(+) binding site. Residue Thr-120 coordinates ATP. Thr-175 provides a ligand contact to substrate.

Belongs to the type III pantothenate kinase family. Homodimer. It depends on NH4(+) as a cofactor. Requires K(+) as cofactor.

The protein localises to the cytoplasm. The enzyme catalyses (R)-pantothenate + ATP = (R)-4'-phosphopantothenate + ADP + H(+). It participates in cofactor biosynthesis; coenzyme A biosynthesis; CoA from (R)-pantothenate: step 1/5. Catalyzes the phosphorylation of pantothenate (Pan), the first step in CoA biosynthesis. The chain is Type III pantothenate kinase from Porphyromonas gingivalis (strain ATCC 33277 / DSM 20709 / CIP 103683 / JCM 12257 / NCTC 11834 / 2561).